The sequence spans 693 residues: TBC1 domain family member 14 (693 aa).

S91 is modified (phosphoserine). 2 disordered regions span residues 108–130 and 271–304; these read PSCA…SSTF and NAQK…RKNL. Over residues 271–288 the composition is skewed to basic and acidic residues; it reads NAQKDSKRIQKEYEDKAG. S295 carries the post-translational modification Phosphoserine. The region spanning 401 to 611 is the Rab-GAP TBC domain; that stretch reads GIPPSVRGKV…RIWDVFCRDG (211 aa).

As to quaternary structure, interacts with ULK1. May interact with RAB11A and RAB11B, but does not exhibit any GTPase-activating activity toward these proteins. Interacts with TRAPPC8.

Its subcellular location is the golgi apparatus. The protein resides in the cis-Golgi network. The protein localises to the trans-Golgi network. Its function is as follows. Plays a role in the regulation of starvation-induced autophagosome formation. Together with the TRAPPIII complex, regulates a constitutive trafficking step from peripheral recycling endosomes to the early Golgi, maintaining the cycling pool of ATG9 required for initiation of autophagy. In Homo sapiens (Human), this protein is TBC1 domain family member 14 (TBC1D14).